Here is a 597-residue protein sequence, read N- to C-terminus: Cytosolic phospholipase A2 gamma (597 aa).

The 597-residue stretch at 1–597 (MELSSGVCPA…FKKSHNISKD (597 aa)) folds into the PLA2c domain. The active-site Nucleophile is Ser-83. Asp-417 acts as the Proton acceptor in catalysis. Positions 576 to 597 (RVKDPQGSQTVEFKKSHNISKD) are disordered. Residues 587–597 (EFKKSHNISKD) are compositionally biased toward basic and acidic residues.

Highly expressed in ovary, where it localizes to oocytes in preantral and antral stage follicles (at protein level). Not detected in other tissues tested.

Its subcellular location is the nucleus. It is found in the nucleoplasm. The protein localises to the nucleus envelope. It localises to the cytoplasm. The protein resides in the cell cortex. Its subcellular location is the cytoskeleton. It is found in the spindle. The catalysed reaction is a 1,2-diacyl-sn-glycero-3-phosphocholine + H2O = a 1-acyl-sn-glycero-3-phosphocholine + a fatty acid + H(+). It catalyses the reaction a 1-O-alkyl-2-acyl-sn-glycero-3-phosphocholine + H2O = a 1-O-alkyl-sn-glycero-3-phosphocholine + a fatty acid + H(+). It carries out the reaction 1,2-dihexadecanoyl-sn-glycero-3-phosphocholine + H2O = 1-hexadecanoyl-sn-glycero-3-phosphocholine + hexadecanoate + H(+). The enzyme catalyses 1-hexadecanoyl-2-(9Z-octadecenoyl)-sn-glycero-3-phosphocholine + H2O = 1-hexadecanoyl-sn-glycero-3-phosphocholine + (9Z)-octadecenoate + H(+). The catalysed reaction is 1-hexadecanoyl-2-(9Z,12Z-octadecadienoyl)-sn-glycero-3-phosphocholine + H2O = (9Z,12Z)-octadecadienoate + 1-hexadecanoyl-sn-glycero-3-phosphocholine + H(+). It catalyses the reaction 1-hexadecanoyl-2-(5Z,8Z,11Z,14Z-eicosatetraenoyl)-sn-glycero-3-phosphocholine + H2O = 1-hexadecanoyl-sn-glycero-3-phosphocholine + (5Z,8Z,11Z,14Z)-eicosatetraenoate + H(+). It carries out the reaction 1-O-hexadecyl-2-(5Z,8Z,11Z,14Z)-eicosatetraenoyl-sn-glycero-3-phosphocholine + H2O = 1-O-hexadecyl-sn-glycero-3-phosphocholine + (5Z,8Z,11Z,14Z)-eicosatetraenoate + H(+). The enzyme catalyses 1-hexadecanoyl-2-(5Z,8Z,11Z,14Z-eicosatetraenoyl)-sn-glycero-3-phosphocholine + H2O = 2-(5Z,8Z,11Z,14Z)-eicosatetraenoyl-sn-glycero-3-phosphocholine + hexadecanoate + H(+). The catalysed reaction is a 1-acyl-sn-glycero-3-phosphocholine + H2O = sn-glycerol 3-phosphocholine + a fatty acid + H(+). It catalyses the reaction 1-hexadecanoyl-sn-glycero-3-phosphocholine + H2O = sn-glycerol 3-phosphocholine + hexadecanoate + H(+). It carries out the reaction 2 1-hexadecanoyl-sn-glycero-3-phosphocholine = 1,2-dihexadecanoyl-sn-glycero-3-phosphocholine + sn-glycerol 3-phosphocholine. The enzyme catalyses 1-hexadecanoyl-sn-glycero-3-phosphoethanolamine + 1-hexadecanoyl-sn-glycero-3-phosphocholine = 1,2-dihexadecanoyl-sn-glycero-3-phosphoethanolamine + sn-glycerol 3-phosphocholine. The catalysed reaction is 1-hexadecanoyl-sn-glycero-3-phosphoethanolamine + 1-hexadecanoyl-sn-glycero-3-phosphocholine = sn-glycero-3-phosphoethanolamine + 1,2-dihexadecanoyl-sn-glycero-3-phosphocholine. It catalyses the reaction 2 1-hexadecanoyl-sn-glycero-3-phosphoethanolamine = 1,2-dihexadecanoyl-sn-glycero-3-phosphoethanolamine + sn-glycero-3-phosphoethanolamine. It carries out the reaction 1-O-hexadecyl-sn-glycero-3-phosphocholine + 1-hexadecanoyl-sn-glycero-3-phosphocholine = 1-O-hexadecyl-2-hexadecanoyl-sn-glycero-3-phosphocholine + sn-glycerol 3-phosphocholine. The enzyme catalyses a 1-O-(1Z-alkenyl)-sn-glycero-3-phosphoethanolamine + 1-hexadecanoyl-sn-glycero-3-phosphocholine = 1-O-(1Z)-alkenyl-2-hexadecanoyl-sn-glycero-3-phosphoethanolamine + sn-glycerol 3-phosphocholine. The catalysed reaction is 1-O-hexadecyl-sn-glycero-3-phosphocholine + 1-hexadecanoyl-sn-glycero-3-phosphoethanolamine = 1-O-hexadecyl-2-hexadecanoyl-sn-glycero-3-phosphocholine + sn-glycero-3-phosphoethanolamine. It catalyses the reaction 1-octadecanoyl-2-(5Z,8Z,11Z,14Z)-eicosatetraenoyl-sn-glycero-3-phosphoethanolamine + 1-hexadecanoyl-sn-glycero-3-phosphocholine = 1-octadecanoyl-sn-glycero-3-phosphoethanolamine + 1-hexadecanoyl-2-(5Z,8Z,11Z,14Z-eicosatetraenoyl)-sn-glycero-3-phosphocholine. It carries out the reaction 1-octadecanoyl-2-(5Z,8Z,11Z,14Z)-eicosatetraenoyl-sn-glycero-3-phosphoethanolamine + 1-O-hexadecyl-sn-glycero-3-phosphocholine = 1-octadecanoyl-sn-glycero-3-phosphoethanolamine + 1-O-hexadecyl-2-(5Z,8Z,11Z,14Z)-eicosatetraenoyl-sn-glycero-3-phosphocholine. The enzyme catalyses 1-hexadecanoyl-2-(9Z,12Z-octadecadienoyl)-sn-glycero-3-phosphocholine + a 1-O-(1Z-alkenyl)-sn-glycero-3-phosphoethanolamine = 1-O-(1Z-alkenyl)-2-(9Z,12Z-octadecadienoyl)-sn-glycero-3-phosphoethanolamine + 1-hexadecanoyl-sn-glycero-3-phosphocholine. The catalysed reaction is 1-hexadecanoyl-2-(5Z,8Z,11Z,14Z-eicosatetraenoyl)-sn-glycero-3-phosphocholine + a 1-O-(1Z-alkenyl)-sn-glycero-3-phosphoethanolamine = 1-O-(1Z)-alkenyl-2-(5Z,8Z,11Z,14Z)-eicosatetraenoyl-sn-glycero-3-phosphoethanolamine + 1-hexadecanoyl-sn-glycero-3-phosphocholine. Functionally, calcium-independent phospholipase, lysophospholipase and O-acyltransferase involved in phospholipid remodeling. Preferentially hydrolyzes the ester bond of the fatty acyl group attached at sn-2 position of phospholipids with choline and ethanolamine head groups, producing lysophospholipids that are used in deacylation-reacylation cycles. Transfers the sn-1 fatty acyl from one lysophospholipid molecule to the sn-2 position of another lysophospholipid to form diacyl, alkylacyl and alkenylacyl glycerophospholipids. Cleaves ester bonds but not alkyl or alkenyl ether bonds at the sn-1 position of lysophospholipids. Catalyzes sn-2 fatty acyl transfer from phospholipids to the sn-2 position of 1-O-alkyl or 1-O-alkenyl lysophospholipids with lower efficiency. The chain is Cytosolic phospholipase A2 gamma from Mus musculus (Mouse).